We begin with the raw amino-acid sequence, 197 residues long: Holliday junction branch migration complex subunit RuvA (197 aa).

The segment at 1-63 (MYAYLKGIIT…EDAHLLYGFR (63 aa)) is domain I. The domain II stretch occupies residues 64-142 (SEDEKKLFLS…VAGDDLPAKI (79 aa)). A flexible linker region spans residues 143–147 (AVQAS). Residues 148 to 197 (AENQELEEAMEAMLALGYKATELKKIKKFFEGTTDTAENYIKSALKMLVK) form a domain III region.

The protein belongs to the RuvA family. In terms of assembly, homotetramer. Forms an RuvA(8)-RuvB(12)-Holliday junction (HJ) complex. HJ DNA is sandwiched between 2 RuvA tetramers; dsDNA enters through RuvA and exits via RuvB. An RuvB hexamer assembles on each DNA strand where it exits the tetramer. Each RuvB hexamer is contacted by two RuvA subunits (via domain III) on 2 adjacent RuvB subunits; this complex drives branch migration. In the full resolvosome a probable DNA-RuvA(4)-RuvB(12)-RuvC(2) complex forms which resolves the HJ.

It localises to the cytoplasm. Its function is as follows. The RuvA-RuvB-RuvC complex processes Holliday junction (HJ) DNA during genetic recombination and DNA repair, while the RuvA-RuvB complex plays an important role in the rescue of blocked DNA replication forks via replication fork reversal (RFR). RuvA specifically binds to HJ cruciform DNA, conferring on it an open structure. The RuvB hexamer acts as an ATP-dependent pump, pulling dsDNA into and through the RuvAB complex. HJ branch migration allows RuvC to scan DNA until it finds its consensus sequence, where it cleaves and resolves the cruciform DNA. This is Holliday junction branch migration complex subunit RuvA from Streptococcus pneumoniae (strain Taiwan19F-14).